The sequence spans 104 residues: Type VII secretion system extracellular protein B (104 aa).

Belongs to the WXG100 family. In terms of assembly, homodimer. When mixed with EsxA does not form heterodimers.

The protein resides in the secreted. Its function is as follows. Virulence factor that is important for the establishment of infection in the host. EsxB is required for EsxA synthesis as well as secretion. Mediates together with EsxA the release of S.aureus from the host cell. Also inhibits host cytokine production and thus modulates dendritic cell-mediated immunity. This Staphylococcus aureus (strain MSSA476) protein is Type VII secretion system extracellular protein B.